We begin with the raw amino-acid sequence, 211 residues long: Protein GrpE (211 aa).

Residues Met1–Leu43 form a disordered region. Residues Asp11–Ala23 are compositionally biased toward low complexity. Positions Glu33 to Leu43 are enriched in basic and acidic residues.

It belongs to the GrpE family. As to quaternary structure, homodimer.

It localises to the cytoplasm. Participates actively in the response to hyperosmotic and heat shock by preventing the aggregation of stress-denatured proteins, in association with DnaK and GrpE. It is the nucleotide exchange factor for DnaK and may function as a thermosensor. Unfolded proteins bind initially to DnaJ; upon interaction with the DnaJ-bound protein, DnaK hydrolyzes its bound ATP, resulting in the formation of a stable complex. GrpE releases ADP from DnaK; ATP binding to DnaK triggers the release of the substrate protein, thus completing the reaction cycle. Several rounds of ATP-dependent interactions between DnaJ, DnaK and GrpE are required for fully efficient folding. The chain is Protein GrpE from Rhizobium etli (strain ATCC 51251 / DSM 11541 / JCM 21823 / NBRC 15573 / CFN 42).